Here is a 90-residue protein sequence, read N- to C-terminus: Small regulatory polypeptide of amino acid response (90 aa).

Topologically, residues Met1–Thr18 are lumenal. A helical transmembrane segment spans residues Ala19–Cys39. The Cytoplasmic segment spans residues Cys40–Met90.

As to quaternary structure, interacts with components of the lysosomal V-ATPase complex. Interacts with ATP6V0A1. Interacts with ATP6V0A2. In terms of tissue distribution, highly expressed in lung, heart and skeletal muscle.

The protein resides in the late endosome membrane. The protein localises to the lysosome membrane. In terms of biological role, negative regulator of amino acid sensing and mTORC1, a signaling complex promoting cell growth in response to growth factors, energy levels and amino acids. Negatively regulates mTORC1 activation by inhibiting recruitment of mTORC1 to lysosomes upon stimulation with amino acids: acts by promoting the formation of a tightly bound supercomplex composed of the lysosomal V-ATPase, Ragulator and Rag GTPases, preventing recruitment of mTORC1. Acts as a regulator of muscle regeneration following injury by regulating mTORC1 activation. The polypeptide is Small regulatory polypeptide of amino acid response (Homo sapiens (Human)).